A 212-amino-acid chain; its full sequence is ER lumen protein-retaining receptor 2 (212 aa).

Residues 1 to 4 (MNIF) lie on the Lumenal side of the membrane. The chain crosses the membrane as a helical span at residues 5–24 (RLTGDLSHLAAIVILLLKIW). Residues 25-32 (KTRSCAGI) are Cytoplasmic-facing. Residues 33 to 52 (SGKSQLLFALVFTTRYLDLF) form a helical membrane-spanning segment. An interaction with the K-D-E-L motif on target proteins region spans residues 47–48 (RY). The Lumenal portion of the chain corresponds to 53 to 58 (TSFISL). Residues 59-79 (YNTSMKLIYIACSYATVYLIY) traverse the membrane as a helical segment. The Cytoplasmic portion of the chain corresponds to 80–92 (MKFKATYDGNHDT). The helical transmembrane segment at 93–110 (FRVEFLVVPVGGLSFLVN) threads the bilayer. Residues 111 to 116 (HDFSPL) are Lumenal-facing. The chain crosses the membrane as a helical span at residues 117–135 (EILWTFSIYLESVAILPQL). Topologically, residues 136-149 (FMISKTGEAETITT) are cytoplasmic. The helical transmembrane segment at 150–168 (HYLFFLGLYRALYLVNWIW) threads the bilayer. The interval 159-169 (RALYLVNWIWR) is interaction with the K-D-E-L motif on target proteins. Topologically, residues 169 to 178 (RFYFEGFFDL) are lumenal. A helical transmembrane segment spans residues 179-199 (IAVVAGVVQTILYCDFFYLYI). The Cytoplasmic portion of the chain corresponds to 200-212 (TKVLKGKKLSLPA). Residues 204-207 (KGKK) form an important for recycling of cargo proteins with the sequence motif K-D-E-L from the Golgi to the endoplasmic reticulum region.

Belongs to the ERD2 family.

It is found in the endoplasmic reticulum membrane. The protein resides in the golgi apparatus membrane. The protein localises to the cytoplasmic vesicle. It localises to the COPI-coated vesicle membrane. Functionally, membrane receptor that binds the K-D-E-L sequence motif in the C-terminal part of endoplasmic reticulum resident proteins and maintains their localization in that compartment by participating to their vesicle-mediated recycling back from the Golgi. Binding is pH dependent, and is optimal at pH 5-5.4. This chain is ER lumen protein-retaining receptor 2 (Kdelr2), found in Mus musculus (Mouse).